Here is a 61-residue protein sequence, read N- to C-terminus: Large ribosomal subunit protein bL28 (61 aa).

This sequence belongs to the bacterial ribosomal protein bL28 family.

The polypeptide is Large ribosomal subunit protein bL28 (Nocardioides sp. (strain ATCC BAA-499 / JS614)).